We begin with the raw amino-acid sequence, 583 residues long: Proteasome-associated ATPase (583 aa).

Over residues 1 to 19 (METPNQDSGRTPTEQSAAN) the composition is skewed to polar residues. The disordered stretch occupies residues 1–22 (METPNQDSGRTPTEQSAANDLS). A coiled-coil region spans residues 24-75 (ADRQVNILRDKLRHIDRQLAAATQNNTKLVSMLETAKAEILRLKNALDQEGQ). 271 to 276 (GCGKTL) serves as a coordination point for ATP. Positions 582–583 (YL) are docks into pockets in the proteasome alpha-ring.

This sequence belongs to the AAA ATPase family. In terms of assembly, homohexamer. Assembles into a hexameric ring structure that caps the 20S proteasome core. Strongly interacts with the prokaryotic ubiquitin-like protein Pup through a hydrophobic interface; the interacting region of ARC lies in its N-terminal coiled-coil domain. There is one Pup binding site per ARC hexamer ring. Upon ATP-binding, the C-terminus of ARC interacts with the alpha-rings of the proteasome core, possibly by binding to the intersubunit pockets.

The protein operates within protein degradation; proteasomal Pup-dependent pathway. Functionally, ATPase which is responsible for recognizing, binding, unfolding and translocation of pupylated proteins into the bacterial 20S proteasome core particle. May be essential for opening the gate of the 20S proteasome via an interaction with its C-terminus, thereby allowing substrate entry and access to the site of proteolysis. Thus, the C-termini of the proteasomal ATPase may function like a 'key in a lock' to induce gate opening and therefore regulate proteolysis. The sequence is that of Proteasome-associated ATPase from Pseudarthrobacter chlorophenolicus (strain ATCC 700700 / DSM 12829 / CIP 107037 / JCM 12360 / KCTC 9906 / NCIMB 13794 / A6) (Arthrobacter chlorophenolicus).